The primary structure comprises 441 residues: Ribulose bisphosphate carboxylase large chain (441 aa).

Positions 89 and 139 each coordinate substrate. Residue Lys-141 is the Proton acceptor of the active site. Lys-143 is a substrate binding site. 3 residues coordinate Mg(2+): Lys-167, Asp-169, and Glu-170. Lys-167 is subject to N6-carboxylysine. His-260 (proton acceptor) is an active-site residue. Residues Xaa-261 and Ser-345 each coordinate substrate.

It belongs to the RuBisCO large chain family. Type I subfamily. In terms of assembly, heterohexadecamer of 8 large chains and 8 small chains; disulfide-linked. The disulfide link is formed within the large subunit homodimers. It depends on Mg(2+) as a cofactor. In terms of processing, the disulfide bond which can form in the large chain dimeric partners within the hexadecamer appears to be associated with oxidative stress and protein turnover.

The protein localises to the plastid. It localises to the chloroplast. It catalyses the reaction 2 (2R)-3-phosphoglycerate + 2 H(+) = D-ribulose 1,5-bisphosphate + CO2 + H2O. The enzyme catalyses D-ribulose 1,5-bisphosphate + O2 = 2-phosphoglycolate + (2R)-3-phosphoglycerate + 2 H(+). In terms of biological role, ruBisCO catalyzes two reactions: the carboxylation of D-ribulose 1,5-bisphosphate, the primary event in carbon dioxide fixation, as well as the oxidative fragmentation of the pentose substrate in the photorespiration process. Both reactions occur simultaneously and in competition at the same active site. This Asclepias exaltata (Poke milkweed) protein is Ribulose bisphosphate carboxylase large chain.